Consider the following 355-residue polypeptide: C-C chemokine receptor type 8 (355 aa).

At 1–35 the chain is on the extracellular side; sequence MDYTLDLSVTTVTDYYYPDIFSSPCDAELIQTNGK. The chain crosses the membrane as a helical span at residues 36-63; that stretch reads LLLAVFYCLLFVFSLLGNSLVILVLVVC. The Cytoplasmic portion of the chain corresponds to 64 to 73; it reads KKLRSITDVY. A helical membrane pass occupies residues 74–93; it reads LLNLALSDLLFVFSFPFQTY. Topologically, residues 94 to 107 are extracellular; sequence YLLDQWVFGTVMCK. An intrachain disulfide couples Cys106 to Cys183. A helical transmembrane segment spans residues 108 to 129; that stretch reads VVSGFYYIGFYSSMFFITLMSV. Over 130–146 the chain is Cytoplasmic; sequence DRYLAVVHAVYALKVRT. Residues 147–171 form a helical membrane-spanning segment; sequence IRMGTTLCLAVWLTAIMATIPLLVF. Residues 172–202 lie on the Extracellular side of the membrane; that stretch reads YQVASEDGVLQCYSFYNQQTLKWKIFTNFKM. A helical transmembrane segment spans residues 203–222; that stretch reads NILGLLIPFTIFMFCYIKIL. The Cytoplasmic segment spans residues 223–238; that stretch reads HQLKRCQNHNKTKAIR. Residues 239–263 form a helical membrane-spanning segment; the sequence is LVLIVVIASLLFWVPFNVVLFLTSL. Residues 264 to 280 are Extracellular-facing; the sequence is HSMHILDGCSISQQLTY. A helical membrane pass occupies residues 281 to 304; sequence ATHVTEIISFTHCCVNPVIYAFVG. Residues 305 to 355 lie on the Cytoplasmic side of the membrane; it reads EKFKKHLSEIFQKSCSQIFNYLGRQMPRESCEKSSSCQQHSSRSSSVDYIL.

This sequence belongs to the G-protein coupled receptor 1 family.

It is found in the cell membrane. Functionally, receptor for the chemokine CCL1/SCYA1/I-309. May regulate monocyte chemotaxis and thymic cell line apoptosis. Alternative coreceptor with CD4 for HIV-1 infection. This chain is C-C chemokine receptor type 8 (CCR8), found in Homo sapiens (Human).